The primary structure comprises 339 residues: Ketol-acid reductoisomerase (NADP(+)) (339 aa).

A KARI N-terminal Rossmann domain is found at 1-182 (MRVYYDRDAD…GGGRSGIIET (182 aa)). NADP(+) is bound by residues 24-27 (YGSQ), Arg48, Ser51, Thr53, and 83-86 (DEHQ). The active site involves His108. Gly134 contributes to the NADP(+) binding site. The region spanning 183 to 328 (NFREECETDL…ARLRGMMPWI (146 aa)) is the KARI C-terminal knotted domain. Mg(2+) is bound by residues Asp191, Glu195, Glu227, and Glu231. A substrate-binding site is contributed by Ser252.

It belongs to the ketol-acid reductoisomerase family. The cofactor is Mg(2+).

It catalyses the reaction (2R)-2,3-dihydroxy-3-methylbutanoate + NADP(+) = (2S)-2-acetolactate + NADPH + H(+). The enzyme catalyses (2R,3R)-2,3-dihydroxy-3-methylpentanoate + NADP(+) = (S)-2-ethyl-2-hydroxy-3-oxobutanoate + NADPH + H(+). It participates in amino-acid biosynthesis; L-isoleucine biosynthesis; L-isoleucine from 2-oxobutanoate: step 2/4. The protein operates within amino-acid biosynthesis; L-valine biosynthesis; L-valine from pyruvate: step 2/4. Functionally, involved in the biosynthesis of branched-chain amino acids (BCAA). Catalyzes an alkyl-migration followed by a ketol-acid reduction of (S)-2-acetolactate (S2AL) to yield (R)-2,3-dihydroxy-isovalerate. In the isomerase reaction, S2AL is rearranged via a Mg-dependent methyl migration to produce 3-hydroxy-3-methyl-2-ketobutyrate (HMKB). In the reductase reaction, this 2-ketoacid undergoes a metal-dependent reduction by NADPH to yield (R)-2,3-dihydroxy-isovalerate. The polypeptide is Ketol-acid reductoisomerase (NADP(+)) (Caulobacter vibrioides (strain ATCC 19089 / CIP 103742 / CB 15) (Caulobacter crescentus)).